The sequence spans 154 residues: Superoxide dismutase [Cu-Zn] (154 aa).

Cu cation is bound by residues His-47, His-49, and His-64. A disulfide bond links Cys-58 and Cys-147. His-64, His-72, His-81, and Asp-84 together coordinate Zn(2+). A Cu cation-binding site is contributed by His-121.

The protein belongs to the Cu-Zn superoxide dismutase family. In terms of assembly, homodimer. It depends on Cu cation as a cofactor. Zn(2+) serves as cofactor.

Its subcellular location is the cytoplasm. The enzyme catalyses 2 superoxide + 2 H(+) = H2O2 + O2. Destroys radicals which are normally produced within the cells and which are toxic to biological systems. In Pinus sylvestris (Scotch pine), this protein is Superoxide dismutase [Cu-Zn] (SODCC).